The primary structure comprises 142 residues: Large ribosomal subunit protein uL11 (142 aa).

This sequence belongs to the universal ribosomal protein uL11 family. In terms of assembly, part of the ribosomal stalk of the 50S ribosomal subunit. Interacts with L10 and the large rRNA to form the base of the stalk. L10 forms an elongated spine to which L12 dimers bind in a sequential fashion forming a multimeric L10(L12)X complex. One or more lysine residues are methylated.

Forms part of the ribosomal stalk which helps the ribosome interact with GTP-bound translation factors. The polypeptide is Large ribosomal subunit protein uL11 (Serratia marcescens).